The sequence spans 127 residues: Small ribosomal subunit protein uS12 (127 aa).

The tract at residues 1-28 (MPTIQQLIRDERSKAKRKTKSPALKQCP) is disordered. 3-methylthioaspartic acid is present on aspartate 89. A disordered region spans residues 104 to 127 (ATGVKNRQKARSKYGTKRPKPAAK). Residues 109 to 127 (NRQKARSKYGTKRPKPAAK) show a composition bias toward basic residues.

This sequence belongs to the universal ribosomal protein uS12 family. In terms of assembly, part of the 30S ribosomal subunit. Contacts proteins S8 and S17. May interact with IF1 in the 30S initiation complex.

Its function is as follows. With S4 and S5 plays an important role in translational accuracy. In terms of biological role, interacts with and stabilizes bases of the 16S rRNA that are involved in tRNA selection in the A site and with the mRNA backbone. Located at the interface of the 30S and 50S subunits, it traverses the body of the 30S subunit contacting proteins on the other side and probably holding the rRNA structure together. The combined cluster of proteins S8, S12 and S17 appears to hold together the shoulder and platform of the 30S subunit. The chain is Small ribosomal subunit protein uS12 from Microcystis aeruginosa (strain NIES-843 / IAM M-2473).